The primary structure comprises 416 residues: Transcription factor PIL1 (416 aa).

Disordered regions lie at residues 1–24 (MEAK…NIKP), 89–113 (VSQS…KLKS), and 197–231 (ESTY…KRST). Positions 8-22 (SSSSEPNMISPSSNI) are enriched in low complexity. A coiled-coil region spans residues 95–124 (QQDKETNEQMNNNKKKLKSSKIEFERNVSK). A compositionally biased stretch (basic residues) spans 216–229 (VHARTRKPVTKRKR). The bHLH domain occupies 229–278 (RSTEVHKLYERKRRDEFNKKMRALQDLLPNCYKDDKASLLDEAIKYMRTL).

Homodimer. Interacts with APRR1/TOC1. Associates to PTAC12/HMR/PAP5 which acts as a transcriptional coactivator. In terms of tissue distribution, mainly expressed in stems, fruits and flowers and, to a lower extent, in leaves, seedlings and roots. Accumulates in etiolated seedlings.

It localises to the nucleus. Functionally, transcription factor. Involved in responses to transient and long-term shade. Required for the light-mediated inhibition of hypocotyl elongation. Necessary for rapid light-induced expression of the photomorphogenesis- and circadian-related gene APRR9. Seems to play a role in multiple PHYB responses, such as flowering transition and petiole elongation. The chain is Transcription factor PIL1 from Arabidopsis thaliana (Mouse-ear cress).